The following is a 74-amino-acid chain: Exodeoxyribonuclease 7 small subunit (74 aa).

This sequence belongs to the XseB family. Heterooligomer composed of large and small subunits.

The protein resides in the cytoplasm. It catalyses the reaction Exonucleolytic cleavage in either 5'- to 3'- or 3'- to 5'-direction to yield nucleoside 5'-phosphates.. In terms of biological role, bidirectionally degrades single-stranded DNA into large acid-insoluble oligonucleotides, which are then degraded further into small acid-soluble oligonucleotides. This is Exodeoxyribonuclease 7 small subunit from Vesicomyosocius okutanii subsp. Calyptogena okutanii (strain HA).